Reading from the N-terminus, the 457-residue chain is Carboxypeptidase N catalytic chain (457 aa).

The signal sequence occupies residues 1–23 (MPDLPSAFLPLLLLSKFVTPVTF). Residues 24-338 (RHHRYDDLVR…EALIQFLEQV (315 aa)) enclose the Peptidase M14 domain. Cysteine 42 and cysteine 104 are oxidised to a cystine. 3 residues coordinate Zn(2+): histidine 86, glutamate 89, and histidine 216. A disulfide bond links cysteine 271 and cysteine 311. The active-site Proton donor/acceptor is the glutamate 308. 3 O-linked (GalNAc...) threonine glycosylation sites follow: threonine 400, threonine 402, and threonine 409. Positions 418–457 (STTQVHPVQKAPGRGQGSRAKQPRTSRKKDQAAKRHRGPA) are disordered.

It belongs to the peptidase M14 family. In terms of assembly, tetramer of two catalytic chains and two glycosylated inactive chains. Zn(2+) is required as a cofactor. As to expression, plasma. Expressed in liver.

The protein localises to the secreted. The protein resides in the extracellular space. The enzyme catalyses Release of a C-terminal basic amino acid, preferentially lysine.. Functionally, protects the body from potent vasoactive and inflammatory peptides containing C-terminal Arg or Lys (such as kinins or anaphylatoxins) which are released into the circulation. This chain is Carboxypeptidase N catalytic chain (Cpn1), found in Rattus norvegicus (Rat).